A 501-amino-acid polypeptide reads, in one-letter code: Acetylcholine receptor subunit beta (501 aa).

The signal sequence occupies residues 1 to 23 (MTPGALLMLLGALGAPLAPGVRG). The Extracellular segment spans residues 24–244 (SEAEGRLREK…VIFYLIIRRK (221 aa)). A disulfide bridge links Cys151 with Cys165. N-linked (GlcNAc...) asparagine glycosylation occurs at Asn164. The next 3 membrane-spanning stretches (helical) occupy residues 245-269 (PLFY…VFYL), 277-295 (MGLS…LLLA), and 311-332 (YLMF…VLNL). The Cytoplasmic portion of the chain corresponds to 333-469 (HHRSPHTHQM…WQFVAMVVDR (137 aa)). Tyr390 is modified (phosphotyrosine; by Tyr-kinases). A helical membrane pass occupies residues 470 to 488 (LFLWTFIIFTSVGTLVIFL).

The protein belongs to the ligand-gated ion channel (TC 1.A.9) family. Acetylcholine receptor (TC 1.A.9.1) subfamily. Beta-1/CHRNB1 sub-subfamily. In terms of assembly, pentamer of two alpha chains, and one each of the beta, delta, and gamma (in immature muscle) or epsilon (in mature muscle) chains. The muscle heteropentamer composed of alpha-1, beta-1, delta, epsilon subunits interacts with the alpha-conotoxin ImII.

Its subcellular location is the postsynaptic cell membrane. It is found in the cell membrane. It carries out the reaction K(+)(in) = K(+)(out). The catalysed reaction is Na(+)(in) = Na(+)(out). After binding acetylcholine, the AChR responds by an extensive change in conformation that affects all subunits and leads to opening of an ion-conducting channel across the plasma membrane. The protein is Acetylcholine receptor subunit beta of Homo sapiens (Human).